The primary structure comprises 324 residues: Annexin A3 (324 aa).

Annexin repeat units follow at residues 19–90 (FNPS…ALIT), 91–162 (APAV…TLAD), 174–246 (HLAK…AVVR), and 250–321 (NTPA…KICG). Lys178 is subject to N6-acetyllysine. Thr268 carries the phosphothreonine modification.

The protein belongs to the annexin family.

In terms of biological role, inhibitor of phospholipase A2, also possesses anti-coagulant properties. This is Annexin A3 (Anxa3) from Rattus norvegicus (Rat).